Here is a 1035-residue protein sequence, read N- to C-terminus: FACT complex subunit SPT16 (1035 aa).

A coiled-coil region spans residues 208 to 234; the sequence is EELKITNAKLSDKIENKIDDVKFLKQL. A disordered region spans residues 448-496; that stretch reads NNEEEDNNKKKSSPATKVPSKPDRNSKILRTKLRGEARGGAEDAQKEQI. Over residues 480–496 the composition is skewed to basic and acidic residues; sequence LRGEARGGAEDAQKEQI. At S526 the chain carries Phosphoserine. Residues 636–666 adopt a coiled-coil conformation; that stretch reads MSETFKQIADLKKEATKREQERKALADVVQQ. The residue at position 765 (S765) is a Phosphoserine. 2 disordered regions span residues 768–796 and 956–1035; these read SVDE…QEQE and GSDD…NFRD. Residues 957–1019 are compositionally biased toward acidic residues; the sequence is SDDEASDESE…ESEEGEDWDE (63 aa). A coiled-coil region spans residues 959–983; that stretch reads DEASDESEEEVSEYEASEDDVSDES. Residues 1020–1035 show a composition bias toward basic and acidic residues; that stretch reads LEKKAARADRGANFRD.

Belongs to the peptidase M24 family. SPT16 subfamily. As to quaternary structure, forms a stable heterodimer with POB3. The SPT16-POB3 dimer weakly associates with multiple molecules of NHP6 (NHP6A or NHP6B) to form the FACT (yFACT or SNP) complex. The FACT complex interacts with the CK2 (casein kinase II) complex subunits CKA1, CKA2, CKB1 and CKB2 and the components of the transcription machinery CHD1, CTR9, PAF1 and CDC73. The FACT complex interacts with the PAF1 complex. Interacts with POL1. Interacts with SAS3. Interacts with YTA7.

It is found in the nucleus. Its subcellular location is the chromosome. Its function is as follows. Component of the FACT complex, a general chromatin factor that acts to reorganize nucleosomes. The FACT complex is involved in multiple processes that require DNA as a template such as mRNA elongation, DNA replication and DNA repair. During transcription elongation the FACT complex acts as a histone chaperone that both destabilizes and restores nucleosomal structure. It facilitates the passage of RNA polymerase II and transcription by promoting the dissociation of one histone H2A-H2B dimer from the nucleosome, then subsequently promotes the reestablishment of the nucleosome following the passage of RNA polymerase II. Transcription elongation is promoted by the repression of transcription initiation from cryptic sites. Also acts in establishing transcription initiation complexes and promotes SPT15/TBP-binding to a TATA box. Together with replication factor-A protein (RPA), FACT may play a role in nucleosome deposition during DNA replication. This Saccharomyces cerevisiae (strain ATCC 204508 / S288c) (Baker's yeast) protein is FACT complex subunit SPT16 (SPT16).